A 135-amino-acid chain; its full sequence is DNA-binding protein H-NS homolog (135 aa).

The DNA-binding element occupies 112-117 (QGRTPS).

The protein belongs to the histone-like protein H-NS family. As to quaternary structure, homodimer that oligomerizes on DNA into higher-order complexes that form bridges between disparate regions of DNA compacting it.

The protein resides in the cytoplasm. The protein localises to the nucleoid. In terms of biological role, a DNA-binding protein implicated in transcriptional repression and chromosome organization and compaction. Binds nucleation sites in AT-rich DNA and bridges them, forming higher-order nucleoprotein complexes and condensing the chromosome. A subset of genes are repressed by H-NS in association with other proteins. The polypeptide is DNA-binding protein H-NS homolog (hns) (Buchnera aphidicola subsp. Acyrthosiphon pisum (strain APS) (Acyrthosiphon pisum symbiotic bacterium)).